A 320-amino-acid chain; its full sequence is Phospho-N-acetylmuramoyl-pentapeptide-transferase (320 aa).

Transmembrane regions (helical) follow at residues 5–25, 51–71, 75–95, 121–141, 143–163, 176–196, 198–218, 241–261, and 300–320; these read FWAFTRAFIVTVIFMPAVIKF, MGGALFIAAASLSALIGSVAY, IGFVMVLIPILAVVAYAIIGG, LCAVVIMIIMWIMQIPLILNI, FIGVFNLGIFYFIFLWFWLVG, GLLTGTSLIVYLVYTWIALGV, NHIIVIFNASIIGALVGFLLF, IESIVLGIPFSLLWFGLIFVI, and IDALFWIVTAIIGIIGILYMS.

It belongs to the glycosyltransferase 4 family. MraY subfamily. The cofactor is Mg(2+).

The protein resides in the cell membrane. It catalyses the reaction UDP-N-acetyl-alpha-D-muramoyl-L-alanyl-gamma-D-glutamyl-L-lysyl-D-alanyl-D-alanine + di-trans,octa-cis-undecaprenyl phosphate = Mur2Ac(oyl-L-Ala-gamma-D-Glu-L-Lys-D-Ala-D-Ala)-di-trans,octa-cis-undecaprenyl diphosphate + UMP. It functions in the pathway cell wall biogenesis; peptidoglycan biosynthesis. Functionally, catalyzes the initial step of the lipid cycle reactions in the biosynthesis of the cell wall peptidoglycan: transfers peptidoglycan precursor phospho-MurNAc-pentapeptide from UDP-MurNAc-pentapeptide onto the lipid carrier undecaprenyl phosphate, yielding undecaprenyl-pyrophosphoryl-MurNAc-pentapeptide, known as lipid I. The chain is Phospho-N-acetylmuramoyl-pentapeptide-transferase from Leuconostoc mesenteroides subsp. mesenteroides (strain ATCC 8293 / DSM 20343 / BCRC 11652 / CCM 1803 / JCM 6124 / NCDO 523 / NBRC 100496 / NCIMB 8023 / NCTC 12954 / NRRL B-1118 / 37Y).